Consider the following 379-residue polypeptide: MKILRKNHPLFKIINHSFIDLPTPSNISSWWNFGSLLGMCLMIQILTGLFLAMHYTSDTTTAFSSVAHICRDVNYGWLIRYLHANGASMFFICLFIHVGRGIYYGSYVLSETWNIGIILFLTTMATAFVGYVLPWGQMSFWGATVITNLLSAIPYIGSTLVEWIWGGFSVDKATLTRFFAFHFILPFIITAFVLVHLLFLHETGSNNPSGLNSNSDKIPFHPYYTIKDLLGILFLLTALMILALFFPDILGDPDNYTPANPLNTPAHIKPEWYFLFAYAILRSIPNKLGGVLALLLSILILMAFPLLNTSKQHGLIFRPITQTIYWILIANLLVLTWIGGQPVEYPFTMIGQIASITYFAIILILMPVSNTIENNIIKL.

4 helical membrane-spanning segments follow: residues 33–53 (FGSL…FLAM), 77–98 (WLIR…FIHV), 113–133 (WNIG…GYVL), and 178–198 (FFAF…VHLL). Positions 83 and 97 each coordinate heme b. Heme b contacts are provided by histidine 182 and histidine 196. An a ubiquinone-binding site is contributed by histidine 201. 4 helical membrane passes run 226 to 246 (IKDL…ALFF), 288 to 308 (LGGV…PLLN), 320 to 340 (ITQT…WIGG), and 347 to 367 (FTMI…ILMP).

The protein belongs to the cytochrome b family. The cytochrome bc1 complex contains 11 subunits: 3 respiratory subunits (MT-CYB, CYC1 and UQCRFS1), 2 core proteins (UQCRC1 and UQCRC2) and 6 low-molecular weight proteins (UQCRH/QCR6, UQCRB/QCR7, UQCRQ/QCR8, UQCR10/QCR9, UQCR11/QCR10 and a cleavage product of UQCRFS1). This cytochrome bc1 complex then forms a dimer. Heme b serves as cofactor.

Its subcellular location is the mitochondrion inner membrane. Its function is as follows. Component of the ubiquinol-cytochrome c reductase complex (complex III or cytochrome b-c1 complex) that is part of the mitochondrial respiratory chain. The b-c1 complex mediates electron transfer from ubiquinol to cytochrome c. Contributes to the generation of a proton gradient across the mitochondrial membrane that is then used for ATP synthesis. The protein is Cytochrome b (MT-CYB) of Akodon dolores (Dolorous grass mouse).